The primary structure comprises 343 residues: Glyceraldehyde-3-phosphate dehydrogenase 1 (343 aa).

NAD(+) contacts are provided by residues 13–14 (RI), D35, R79, and S121. Residues 154 to 156 (SCT), T185, 214 to 215 (TG), and R237 each bind D-glyceraldehyde 3-phosphate. C155 functions as the Nucleophile in the catalytic mechanism. An NAD(+)-binding site is contributed by N319.

Belongs to the glyceraldehyde-3-phosphate dehydrogenase family. Homotetramer.

It localises to the cytoplasm. The enzyme catalyses D-glyceraldehyde 3-phosphate + phosphate + NAD(+) = (2R)-3-phospho-glyceroyl phosphate + NADH + H(+). The protein operates within carbohydrate degradation; glycolysis; pyruvate from D-glyceraldehyde 3-phosphate: step 1/5. Catalyzes the oxidative phosphorylation of glyceraldehyde 3-phosphate (G3P) to 1,3-bisphosphoglycerate (BPG) using the cofactor NAD. The first reaction step involves the formation of a hemiacetal intermediate between G3P and a cysteine residue, and this hemiacetal intermediate is then oxidized to a thioester, with concomitant reduction of NAD to NADH. The reduced NADH is then exchanged with the second NAD, and the thioester is attacked by a nucleophilic inorganic phosphate to produce BPG. In Trichormus variabilis (strain ATCC 29413 / PCC 7937) (Anabaena variabilis), this protein is Glyceraldehyde-3-phosphate dehydrogenase 1 (gap1).